Reading from the N-terminus, the 899-residue chain is Protein translocase subunit SecA (899 aa).

Residues Gln89, 107–111 (GEGKT), and Asp502 contribute to the ATP site. 4 residues coordinate Zn(2+): Cys882, Cys884, Cys893, and His894.

It belongs to the SecA family. As to quaternary structure, monomer and homodimer. Part of the essential Sec protein translocation apparatus which comprises SecA, SecYEG and auxiliary proteins SecDF-YajC and YidC. Requires Zn(2+) as cofactor.

The protein localises to the cell inner membrane. It localises to the cytoplasm. The catalysed reaction is ATP + H2O + cellular proteinSide 1 = ADP + phosphate + cellular proteinSide 2.. Part of the Sec protein translocase complex. Interacts with the SecYEG preprotein conducting channel. Has a central role in coupling the hydrolysis of ATP to the transfer of proteins into and across the cell membrane, serving both as a receptor for the preprotein-SecB complex and as an ATP-driven molecular motor driving the stepwise translocation of polypeptide chains across the membrane. The protein is Protein translocase subunit SecA of Allorhizobium ampelinum (strain ATCC BAA-846 / DSM 112012 / S4) (Agrobacterium vitis (strain S4)).